We begin with the raw amino-acid sequence, 336 residues long: Anthranilate phosphoribosyltransferase (336 aa).

5-phospho-alpha-D-ribose 1-diphosphate-binding positions include Gly-79, 82-83 (GD), Thr-87, 89-92 (NISS), 107-115 (KHGNRSVSS), and Ser-119. Gly-79 contributes to the anthranilate binding site. Ser-91 is a binding site for Mg(2+). Asn-110 serves as a coordination point for anthranilate. Arg-165 contacts anthranilate. Residues Asp-223 and Glu-224 each contribute to the Mg(2+) site.

Belongs to the anthranilate phosphoribosyltransferase family. In terms of assembly, homodimer. Mg(2+) is required as a cofactor.

It carries out the reaction N-(5-phospho-beta-D-ribosyl)anthranilate + diphosphate = 5-phospho-alpha-D-ribose 1-diphosphate + anthranilate. It functions in the pathway amino-acid biosynthesis; L-tryptophan biosynthesis; L-tryptophan from chorismate: step 2/5. Catalyzes the transfer of the phosphoribosyl group of 5-phosphorylribose-1-pyrophosphate (PRPP) to anthranilate to yield N-(5'-phosphoribosyl)-anthranilate (PRA). This is Anthranilate phosphoribosyltransferase from Tolumonas auensis (strain DSM 9187 / NBRC 110442 / TA 4).